The chain runs to 390 residues: S-adenosylmethionine synthase 1 (390 aa).

E9 contributes to the Mg(2+) binding site. H15 lines the ATP pocket. Position 43 (E43) interacts with K(+). L-methionine is bound by residues E56 and Q99. ATP contacts are provided by residues 167–169 (DGK), 235–238 (SGRF), D246, 252–253 (RK), A269, K273, and K277. D246 serves as a coordination point for L-methionine. Residue K277 participates in L-methionine binding.

This sequence belongs to the AdoMet synthase family. In terms of assembly, homotetramer. Mn(2+) serves as cofactor. Requires Mg(2+) as cofactor. Co(2+) is required as a cofactor. It depends on K(+) as a cofactor.

It is found in the cytoplasm. The catalysed reaction is L-methionine + ATP + H2O = S-adenosyl-L-methionine + phosphate + diphosphate. Its pathway is amino-acid biosynthesis; S-adenosyl-L-methionine biosynthesis; S-adenosyl-L-methionine from L-methionine: step 1/1. Its function is as follows. Catalyzes the formation of S-adenosylmethionine from methionine and ATP. The reaction comprises two steps that are both catalyzed by the same enzyme: formation of S-adenosylmethionine (AdoMet) and triphosphate, and subsequent hydrolysis of the triphosphate. The polypeptide is S-adenosylmethionine synthase 1 (SAM1) (Petunia hybrida (Petunia)).